The primary structure comprises 114 residues: Protein ORF3 (114 aa).

Hydrophobic regions lie at residues 6 to 22 (CALG…CLCC) and 33 to 53 (AVVG…GLIL). Residues 28 to 68 (VSRLAAVVGGAAAVPAVVSGVTGLILSPSQSPIFIQPTPSP) form an interaction with host HPX region. Positions 48-72 (VTGLILSPSQSPIFIQPTPSPPMSP) are interaction with the capsid protein. Residue Ser-71 is modified to Phosphoserine; by host. Residues 72 to 114 (PLRPGLDLVFANPPDHSAPLGVTRPSAPPLPHVVDLPQLGPRR) form a homodimerization, and interaction with host AMBP/bikunin region. Residues 91 to 114 (LGVTRPSAPPLPHVVDLPQLGPRR) are disordered. The tract at residues 95–104 (RPSAPPLPHV) is interaction with host SRC, HCK, FYN, PIK3R3 and GRB2. The PTAP/PSAP motif motif lies at 96-99 (PSAP).

The protein belongs to the hepevirus ORF3 protein family. In terms of assembly, forms homooligomers. Interacts with host SRC, HCK, FYN, PIK3R3 and GRB2 (via SH3 domain); binding does not activate the kinases. Interacts with host AMBP/bikunin and AMBP/alpha-1-microglobulin peptides. Interacts with host HPX/hemopexin. Interacts (when phosphorylated) with capsid protein ORF2. Interacts with host TSG101; this interaction plays a role in viral release from the host cell. Interacts with host SIRPA; this interaction down-regulates the phosphorylation of host IRF3. Post-translationally, palmitoylated in the N-terminus.

The protein localises to the host endoplasmic reticulum membrane. It is found in the host cytoplasm. Its subcellular location is the host cytoskeleton. It localises to the virion. The protein resides in the host cell membrane. In terms of biological role, small multifunctional phosphoprotein involved in virion morphogenesis, egress and counteracting host innate immunity. Plays critical roles in the final steps of viral release by interacting with host TSG101, a member of the vacuolar protein-sorting pathway and using other cellular host proteins involved in vesicle formation pathway. Also acts as a viroporin and forms ion conductive pores allowing viral particle release. Impairs the generation of type I interferon by down-regulating host TLR3 and TLR7 as well as their downstream signaling pathways. Down-regulates the phosphorylation of host IRF3 via the interaction with host SIRP-alpha, thereby inhibiting IFN-I expression. Interacts with host microtubules. This is Protein ORF3 from Hepatitis E virus genotype 1 (isolate Human/Burma) (HEV-1).